We begin with the raw amino-acid sequence, 817 residues long: MPALVVSPDLVRGAAGASAAPTPAPAAATPGRTVRDVTSPVEVRPVEPSSPAAQVPMAPARPAAATGQASPAAAAPASAAPAASASPADATARKPGSTEVRALRIRGTRSVELVAEGDAELQRDDILLTADALTYREPTDEALAEGNVRLRQGPDVISGPSASLVVGERTGDFQSPRYEITRTKAGLEPGDPPRQVSGGGHADVLHFEGENQYRLENATWSTCSVDDPDWYIKARDLQLDYDREIGVAKGGTVVFKDVPFFWMPWAEFPLVGQRQSGVLPPTIGSSNKTGLDLTVPYYWNIAPNYDATITPRYMGRRGLQLGGEFRYLGDSYAGEVRAEWLGRDRITGEQRTLGSLQHRQQITSSLYGSLDINGVSDDDYFEDLSSRVSVASRVNLLREGRLVYVGSPWWSASALVQSYQTLNSDPDNPVTTPYRRVPQLLTTASRPDLPAGLTFNWHGEYVQFAHPDEDHPEGNRFTAYPQLSLPMQRAGFYVTPKVGVHYTRYDLDEPVAGLTDARTSITRTVPIFSVDSGVTFERDAQFFGTAFTQTLEPRLYYLNVPYRRQNDIPLFDTSRYDFGFAQIFAENRYTGGDRIGDANQLTAAVTTRLIDPETGSERMRALVGQRYYFEDQRVTAGEALRTSRRTDVLGGFSGRITRYSTVDTLLQYNPEDNETERFNFTFRYQPEFAKALNLGYRYARSLVSPDGTIGLRDVNVSGQWPLGGGWYGVGRLTHSLKDDRLTEAIAGIEYDGGCWVARVAMHRFATDPNDVTKAVFIQLELNDLASIGSSPVNLIKRSVPGYGKINDPAANRVFGIE.

The signal sequence occupies residues 1–26 (MPALVVSPDLVRGAAGASAAPTPAPA). Positions 1–101 (MPALVVSPDL…ARKPGSTEVR (101 aa)) are disordered. A compositionally biased stretch (low complexity) spans 13 to 90 (GAAGASAAPT…PAASASPADA (78 aa)).

This sequence belongs to the LptD family. As to quaternary structure, component of the lipopolysaccharide transport and assembly complex. Interacts with LptE and LptA.

Its subcellular location is the cell outer membrane. Together with LptE, is involved in the assembly of lipopolysaccharide (LPS) at the surface of the outer membrane. The protein is LPS-assembly protein LptD of Azoarcus sp. (strain BH72).